Reading from the N-terminus, the 196-residue chain is UMP-CMP kinase (196 aa).

ATP is bound at residue 13-18 (GAGKGT). Positions 33–63 (SAGDLLREERSRTDSEFGQLIDSYIKEGKIV) are NMP. Residues Arg-39, 61 to 63 (KIV), and 93 to 96 (GFPR) each bind a ribonucleoside 5'-phosphate. Asn-100 lines the CMP pocket. The segment at 133–143 (ERGKSSGRTDD) is LID. Arg-134 provides a ligand contact to ATP. Positions 140 and 151 each coordinate a ribonucleoside 5'-phosphate. Arg-179 is an ATP binding site.

The protein belongs to the adenylate kinase family. UMP-CMP kinase subfamily. Monomer. Mg(2+) serves as cofactor.

The protein localises to the nucleus. The protein resides in the cytoplasm. The enzyme catalyses CMP + ATP = CDP + ADP. It carries out the reaction dCMP + ATP = dCDP + ADP. The catalysed reaction is UMP + ATP = UDP + ADP. It catalyses the reaction a 2'-deoxyribonucleoside 5'-diphosphate + ATP = a 2'-deoxyribonucleoside 5'-triphosphate + ADP. The enzyme catalyses a ribonucleoside 5'-diphosphate + ATP = a ribonucleoside 5'-triphosphate + ADP. Its function is as follows. Catalyzes the phosphorylation of pyrimidine nucleoside monophosphates at the expense of ATP. Plays an important role in de novo pyrimidine nucleotide biosynthesis. Has preference for UMP and CMP as phosphate acceptors. Also displays broad nucleoside diphosphate kinase activity. This is UMP-CMP kinase (cmpk) from Danio rerio (Zebrafish).